A 317-amino-acid chain; its full sequence is Thiamine thiazole synthase (317 aa).

Residues cysteine 78, 99 to 100 (EA), glycine 107, and valine 172 contribute to the substrate site. 2,3-didehydroalanine (Cys) is present on cysteine 206. Residues aspartate 208, histidine 223, methionine 275, and 285-287 (RMG) each bind substrate.

Belongs to the THI4 family. In terms of assembly, homooctamer. The cofactor is Fe cation. In terms of processing, during the catalytic reaction, a sulfide is transferred from Cys-206 to a reaction intermediate, generating a dehydroalanine residue.

It localises to the cytoplasm. It is found in the nucleus. It carries out the reaction [ADP-thiazole synthase]-L-cysteine + glycine + NAD(+) = [ADP-thiazole synthase]-dehydroalanine + ADP-5-ethyl-4-methylthiazole-2-carboxylate + nicotinamide + 3 H2O + 2 H(+). In terms of biological role, involved in biosynthesis of the thiamine precursor thiazole. Catalyzes the conversion of NAD and glycine to adenosine diphosphate 5-(2-hydroxyethyl)-4-methylthiazole-2-carboxylic acid (ADT), an adenylated thiazole intermediate. The reaction includes an iron-dependent sulfide transfer from a conserved cysteine residue of the protein to a thiazole intermediate. The enzyme can only undergo a single turnover, which suggests it is a suicide enzyme. May have additional roles in adaptation to various stress conditions and in DNA damage tolerance. In Yarrowia lipolytica (strain CLIB 122 / E 150) (Yeast), this protein is Thiamine thiazole synthase.